A 461-amino-acid polypeptide reads, in one-letter code: Glycine--tRNA ligase (461 aa).

R100 and E163 together coordinate substrate. ATP contacts are provided by residues 195–197, 205–210, 282–283, and 326–329; these read RNE, FRTREF, EL, and GLGR. 210-214 is a binding site for substrate; it reads FEQME. 322-326 is a substrate binding site; it reads EPAAG.

It belongs to the class-II aminoacyl-tRNA synthetase family. As to quaternary structure, homodimer.

Its subcellular location is the cytoplasm. It carries out the reaction tRNA(Gly) + glycine + ATP = glycyl-tRNA(Gly) + AMP + diphosphate. Functionally, catalyzes the attachment of glycine to tRNA(Gly). The protein is Glycine--tRNA ligase of Corynebacterium glutamicum (strain ATCC 13032 / DSM 20300 / JCM 1318 / BCRC 11384 / CCUG 27702 / LMG 3730 / NBRC 12168 / NCIMB 10025 / NRRL B-2784 / 534).